A 245-amino-acid chain; its full sequence is Carboxymethylenebutenolidase homolog (245 aa).

At Ala-2 the chain carries N-acetylalanine. Catalysis depends on residues Cys-132, Asp-179, and His-212. Phosphoserine is present on Ser-223.

Belongs to the dienelactone hydrolase family.

The protein localises to the cytoplasm. It is found in the cytosol. Functionally, cysteine hydrolase. This Mus musculus (Mouse) protein is Carboxymethylenebutenolidase homolog (Cmbl).